Consider the following 273-residue polypeptide: Ciliary microtubule inner protein 2B (273 aa).

Disordered regions lie at residues 59–85 (TLLP…GHER) and 123–164 (RHGE…HASP). Basic and acidic residues predominate over residues 123–159 (RHGEQESHQLPDGAKGEREVEEDQLREAEEPPLKQEL).

Belongs to the CIMIP2 family. Microtubule inner protein component of sperm flagellar doublet microtubules. As to expression, expressed in airway epithelial cells.

The protein localises to the cytoplasm. It localises to the cytoskeleton. Its subcellular location is the cilium axoneme. The protein resides in the flagellum axoneme. Functionally, microtubule inner protein (MIP) part of the dynein-decorated doublet microtubules (DMTs) in cilia axoneme, which is required for motile cilia beating. This chain is Ciliary microtubule inner protein 2B (Cimip2b), found in Mus musculus (Mouse).